The following is a 153-amino-acid chain: SsrA-binding protein (153 aa).

The protein belongs to the SmpB family.

The protein localises to the cytoplasm. Functionally, required for rescue of stalled ribosomes mediated by trans-translation. Binds to transfer-messenger RNA (tmRNA), required for stable association of tmRNA with ribosomes. tmRNA and SmpB together mimic tRNA shape, replacing the anticodon stem-loop with SmpB. tmRNA is encoded by the ssrA gene; the 2 termini fold to resemble tRNA(Ala) and it encodes a 'tag peptide', a short internal open reading frame. During trans-translation Ala-aminoacylated tmRNA acts like a tRNA, entering the A-site of stalled ribosomes, displacing the stalled mRNA. The ribosome then switches to translate the ORF on the tmRNA; the nascent peptide is terminated with the 'tag peptide' encoded by the tmRNA and targeted for degradation. The ribosome is freed to recommence translation, which seems to be the essential function of trans-translation. This is SsrA-binding protein from Orientia tsutsugamushi (strain Boryong) (Rickettsia tsutsugamushi).